Reading from the N-terminus, the 642-residue chain is Threonine--tRNA ligase (642 aa).

Positions 1–61 (MPIITLPDGS…TEDAELQLIT (61 aa)) constitute a TGS domain. Positions 242–535 (DHRKLGKSLD…LVEHYEGKFP (294 aa)) are catalytic. Cys-333, His-384, and His-512 together coordinate Zn(2+).

It belongs to the class-II aminoacyl-tRNA synthetase family. Homodimer. Zn(2+) serves as cofactor.

The protein resides in the cytoplasm. The catalysed reaction is tRNA(Thr) + L-threonine + ATP = L-threonyl-tRNA(Thr) + AMP + diphosphate + H(+). Its function is as follows. Catalyzes the attachment of threonine to tRNA(Thr) in a two-step reaction: L-threonine is first activated by ATP to form Thr-AMP and then transferred to the acceptor end of tRNA(Thr). Also edits incorrectly charged L-seryl-tRNA(Thr). The sequence is that of Threonine--tRNA ligase from Hydrogenovibrio crunogenus (strain DSM 25203 / XCL-2) (Thiomicrospira crunogena).